Consider the following 200-residue polypeptide: Holliday junction branch migration complex subunit RuvA (200 aa).

The interval 1-63 (MYAYVKGKLT…EDAQLLYGFS (63 aa)) is domain I. The tract at residues 64 to 142 (SEEEKDMFLS…ITEEDSDSLL (79 aa)) is domain II. Residues 143–149 (QVDATST) are flexible linker. The domain III stretch occupies residues 150–200 (VQDQFVQEAMLALEALGYSKRELAKVEKTLNKNKYDSVDEAVKAGLQLVVS).

Belongs to the RuvA family. As to quaternary structure, homotetramer. Forms an RuvA(8)-RuvB(12)-Holliday junction (HJ) complex. HJ DNA is sandwiched between 2 RuvA tetramers; dsDNA enters through RuvA and exits via RuvB. An RuvB hexamer assembles on each DNA strand where it exits the tetramer. Each RuvB hexamer is contacted by two RuvA subunits (via domain III) on 2 adjacent RuvB subunits; this complex drives branch migration. In the full resolvosome a probable DNA-RuvA(4)-RuvB(12)-RuvC(2) complex forms which resolves the HJ.

It is found in the cytoplasm. Its function is as follows. The RuvA-RuvB-RuvC complex processes Holliday junction (HJ) DNA during genetic recombination and DNA repair, while the RuvA-RuvB complex plays an important role in the rescue of blocked DNA replication forks via replication fork reversal (RFR). RuvA specifically binds to HJ cruciform DNA, conferring on it an open structure. The RuvB hexamer acts as an ATP-dependent pump, pulling dsDNA into and through the RuvAB complex. HJ branch migration allows RuvC to scan DNA until it finds its consensus sequence, where it cleaves and resolves the cruciform DNA. The sequence is that of Holliday junction branch migration complex subunit RuvA from Staphylococcus aureus (strain USA300).